Here is a 509-residue protein sequence, read N- to C-terminus: 2,3-bisphosphoglycerate-independent phosphoglycerate mutase (509 aa).

Asp11 contributes to the Mn(2+) binding site. Tyr35 carries the phosphotyrosine modification. A Mn(2+)-binding site is contributed by Ser61. Ser61 serves as the catalytic Phosphoserine intermediate. Residues His122, 152–153 (RD), Arg184, Arg190, 260–263 (RPDR), and Lys335 each bind substrate. Residues Asp402, His406, Asp443, His444, and His461 each contribute to the Mn(2+) site.

Belongs to the BPG-independent phosphoglycerate mutase family. In terms of assembly, monomer. Mn(2+) is required as a cofactor.

The enzyme catalyses (2R)-2-phosphoglycerate = (2R)-3-phosphoglycerate. It functions in the pathway carbohydrate degradation; glycolysis; pyruvate from D-glyceraldehyde 3-phosphate: step 3/5. Its function is as follows. Essential for rapid growth and for sporulation. Catalyzes the interconversion of 2-phosphoglycerate and 3-phosphoglycerate. This is 2,3-bisphosphoglycerate-independent phosphoglycerate mutase from Bacillus thuringiensis (strain Al Hakam).